Consider the following 476-residue polypeptide: Inactive glucose-1-phosphate adenylyltransferase small subunit 2, chloroplastic (476 aa).

The transit peptide at Met1–Val55 directs the protein to the chloroplast.

Belongs to the bacterial/plant glucose-1-phosphate adenylyltransferase family. In terms of assembly, heterotetramer. Expressed at very low levels in leaves, inflorescences, fruits, and roots.

The protein localises to the plastid. It localises to the chloroplast. The chain is Inactive glucose-1-phosphate adenylyltransferase small subunit 2, chloroplastic from Arabidopsis thaliana (Mouse-ear cress).